Reading from the N-terminus, the 290-residue chain is 4-hydroxy-tetrahydrodipicolinate synthase (290 aa).

Residue threonine 44 coordinates pyruvate. The active-site Proton donor/acceptor is tyrosine 132. Lysine 160 functions as the Schiff-base intermediate with substrate in the catalytic mechanism. Isoleucine 202 is a pyruvate binding site.

This sequence belongs to the DapA family. As to quaternary structure, homotetramer; dimer of dimers.

It localises to the cytoplasm. It catalyses the reaction L-aspartate 4-semialdehyde + pyruvate = (2S,4S)-4-hydroxy-2,3,4,5-tetrahydrodipicolinate + H2O + H(+). Its pathway is amino-acid biosynthesis; L-lysine biosynthesis via DAP pathway; (S)-tetrahydrodipicolinate from L-aspartate: step 3/4. Catalyzes the condensation of (S)-aspartate-beta-semialdehyde [(S)-ASA] and pyruvate to 4-hydroxy-tetrahydrodipicolinate (HTPA). The chain is 4-hydroxy-tetrahydrodipicolinate synthase from Geotalea uraniireducens (strain Rf4) (Geobacter uraniireducens).